A 181-amino-acid polypeptide reads, in one-letter code: Negative modulator of initiation of replication (181 aa).

Interaction with DNA stretches follow at residues 87–88 (AV), 116–120 (RTRVY), and 150–156 (NTNTGRK).

It belongs to the SeqA family. Homodimer. Polymerizes to form helical filaments.

The protein localises to the cytoplasm. Negative regulator of replication initiation, which contributes to regulation of DNA replication and ensures that replication initiation occurs exactly once per chromosome per cell cycle. Binds to pairs of hemimethylated GATC sequences in the oriC region, thus preventing assembly of replication proteins and re-initiation at newly replicated origins. Repression is relieved when the region becomes fully methylated. The polypeptide is Negative modulator of initiation of replication (Shigella flexneri).